The following is a 272-amino-acid chain: Putative hydro-lyase Rpal_1947 (272 aa).

The protein belongs to the D-glutamate cyclase family.

The chain is Putative hydro-lyase Rpal_1947 from Rhodopseudomonas palustris (strain TIE-1).